Reading from the N-terminus, the 308-residue chain is HTH-type transcriptional activator AllS (308 aa).

Residues 2-59 (FDPETLRTFIAVAETGSFSKAAERLCKTTATISYRIKLLEENTGVALFFRTTRSVTLT) form the HTH lysR-type domain. The segment at residues 19–38 (FSKAAERLCKTTATISYRIK) is a DNA-binding region (H-T-H motif).

This sequence belongs to the LysR transcriptional regulatory family.

Positive regulator essential for the expression of AllD operon. Binds to the AllD promoter. The chain is HTH-type transcriptional activator AllS (allS) from Escherichia coli O157:H7.